The chain runs to 251 residues: Ubiquinone/menaquinone biosynthesis C-methyltransferase UbiE (251 aa).

S-adenosyl-L-methionine is bound by residues T74, D95, and 123–124 (NA).

This sequence belongs to the class I-like SAM-binding methyltransferase superfamily. MenG/UbiE family.

The catalysed reaction is a 2-demethylmenaquinol + S-adenosyl-L-methionine = a menaquinol + S-adenosyl-L-homocysteine + H(+). It catalyses the reaction a 2-methoxy-6-(all-trans-polyprenyl)benzene-1,4-diol + S-adenosyl-L-methionine = a 5-methoxy-2-methyl-3-(all-trans-polyprenyl)benzene-1,4-diol + S-adenosyl-L-homocysteine + H(+). The protein operates within quinol/quinone metabolism; menaquinone biosynthesis; menaquinol from 1,4-dihydroxy-2-naphthoate: step 2/2. Its pathway is cofactor biosynthesis; ubiquinone biosynthesis. Its function is as follows. Methyltransferase required for the conversion of demethylmenaquinol (DMKH2) to menaquinol (MKH2) and the conversion of 2-polyprenyl-6-methoxy-1,4-benzoquinol (DDMQH2) to 2-polyprenyl-3-methyl-6-methoxy-1,4-benzoquinol (DMQH2). This is Ubiquinone/menaquinone biosynthesis C-methyltransferase UbiE from Shewanella woodyi (strain ATCC 51908 / MS32).